We begin with the raw amino-acid sequence, 550 residues long: Centrosomal and chromosomal factor (550 aa).

3 coiled-coil regions span residues 20–44 (SALS…QQHH), 105–126 (VANS…QQQQ), and 239–274 (ATSA…QQAH). Disordered regions lie at residues 21–145 (ALSA…KDYS), 208–320 (LSSG…HAAN), 361–380 (SHYA…RDAM), and 392–465 (SGKL…SASV). 3 stretches are compositionally biased toward low complexity: residues 24–71 (ALQQ…QQQQ), 81–136 (ANTS…NAAP), and 221–320 (AAVA…HAAN). Low complexity-rich tracts occupy residues 396–412 (QQSQ…QQHC) and 450–462 (SATP…SGGS).

In terms of assembly, homodimer. Interacts with esc, Trl, E(z), scm and ph-p in vitro. Found in vivo in an esc-containing complex, which may be the Esc/E(z) complex. Also found in vivo in a Pc-containing complex that may be the PRC1 complex, but does not interact with Pc directly. Interacts with cyclin CycG.

It localises to the nucleus. It is found in the cytoplasm. The protein localises to the cytoskeleton. Its subcellular location is the microtubule organizing center. The protein resides in the centrosome. It localises to the chromosome. In terms of biological role, essential protein required for proper condensation of mitotic chromosomes and progression through mitosis. Binds to specific polytene chromosome sites, many of which are shared with the posterior sex combs (Psc) protein. Involved in maintaining Abd-B repression outside its normal expression domain. This is Centrosomal and chromosomal factor (corto) from Drosophila melanogaster (Fruit fly).